The chain runs to 171 residues: Putative phosphoesterase ABC1741 (171 aa).

H34 acts as the Proton donor in catalysis. 2 consecutive short sequence motifs (HXTX) follow at residues 34–37 and 116–119; these read HITL and HITI. H116 functions as the Proton acceptor in the catalytic mechanism.

It belongs to the 2H phosphoesterase superfamily. YjcG family.

The polypeptide is Putative phosphoesterase ABC1741 (Shouchella clausii (strain KSM-K16) (Alkalihalobacillus clausii)).